The sequence spans 532 residues: MGAGERAAGGGGTQDPGAGCGARALGALCLLLSVGSATACLLLGAQAAALHGRVAALEQERELLRRAGPSGALAAWAETHLERLLREKLDGVAKLRTVREAPSECICPPGPPGRRGKPGRRGDPGPPGQSGRDGYPGPLGLDGKPGLPGPKGEKGAPGDFGPRGAQGQDGAAGPPGPPGPPGARGPPGDTGKDGPRGAQGPEGPRGESGQDGEMGPMGPPGPKGEPGTPGKKGDDGIPSQPGLPGPPGPKGEPGDVGPQGETGVDGAPGLKGEPGHPGTDGAIGPRGPPGLKGEQGDTVVIDYDGRILDALKGPPGPQGAPGPPGIPGAKGELGLPGAPGIDGEKGPKGPKGDPGEPGPAGPKGETGEMGLSGLPGADGPKGEKGESASDHLQESLAQIIVEPGPPGPPGPPGPMGLQGIQGPKGLDGAKGEKGASGERGPHGLPGPVGPPGLIGLPGTKGEKGRPGEPGLDGFPGPRGEKGDRSERGEKGERGVPGRKGVKGQKGEPGPPGLDQPCPVGPDGLPVPGCWHK.

The Cytoplasmic portion of the chain corresponds to 1–23 (MGAGERAAGGGGTQDPGAGCGAR). The helical; Signal-anchor for type II membrane protein transmembrane segment at 24–45 (ALGALCLLLSVGSATACLLLGA) threads the bilayer. Residues 46-532 (QAAALHGRVA…GLPVPGCWHK (487 aa)) are Extracellular-facing. The interval 102-532 (PSECICPPGP…GLPVPGCWHK (431 aa)) is disordered. 4 Collagen-like domains span residues 108–163 (PPGP…FGPR), 173–232 (GPPG…PGKK), 242–297 (GLPG…EQGD), and 313–372 (GPPG…MGLS). Composition is skewed to low complexity over residues 129-145 (QSGRDGYPGPLGLDGKP) and 157-172 (PGDFGPRGAQGQDGAA). Pro residues-rich tracts occupy residues 174-184 (PPGPPGPPGAR), 241-250 (PGLPGPPGPK), and 314-326 (PPGPQGAPGPPGI). Composition is skewed to basic and acidic residues over residues 342–354 (DGEKGPKGPKGDP) and 380–393 (PKGEKGESASDHLQ). Residues 403–414 (PGPPGPPGPPGP) are compositionally biased toward pro residues. 2 consecutive Collagen-like domains span residues 404 to 452 (GPPG…GPPG) and 455 to 514 (GLPG…PGLD). Composition is skewed to basic and acidic residues over residues 427-441 (DGAKGEKGASGERGP) and 478-495 (RGEKGDRSERGEKGERGV).

Homotrimer. Undergoes proteolytic cleavage by furin protease to yield a 60 kDa soluble form that forms a homotrimer and exhibits a low affinity interaction with heparin.

It localises to the cell membrane. This is Collagen alpha-1(XXIII) chain (Col23a1) from Rattus norvegicus (Rat).